Here is a 464-residue protein sequence, read N- to C-terminus: Argininosuccinate lyase (464 aa).

It belongs to the lyase 1 family. Argininosuccinate lyase subfamily.

It is found in the cytoplasm. It catalyses the reaction 2-(N(omega)-L-arginino)succinate = fumarate + L-arginine. It participates in amino-acid biosynthesis; L-arginine biosynthesis; L-arginine from L-ornithine and carbamoyl phosphate: step 3/3. In Pseudomonas aeruginosa (strain ATCC 15692 / DSM 22644 / CIP 104116 / JCM 14847 / LMG 12228 / 1C / PRS 101 / PAO1), this protein is Argininosuccinate lyase.